We begin with the raw amino-acid sequence, 234 residues long: Thymidylate kinase (234 aa).

20 to 27 (GIDASGKT) serves as a coordination point for ATP.

Belongs to the thymidylate kinase family.

It carries out the reaction dTMP + ATP = dTDP + ADP. Its function is as follows. Phosphorylation of dTMP to form dTDP in both de novo and salvage pathways of dTTP synthesis. The polypeptide is Thymidylate kinase (Mycoplasmopsis pulmonis (strain UAB CTIP) (Mycoplasma pulmonis)).